The sequence spans 1588 residues: MLPPKHLSATKPKKSWAPNLYELDSDLTKEPDVIIGEGPTDSEFFHQRFRNLIYVEFVGPRKTLIKLRNLCLDWLQPETHTKEEIIELLVLEQYLTIIPEKLKPWVRAKKPENCEKLVTLLENYKEMYQPEDDNNSDVTSDDDMTRNRRESSPPHSVHSFSGDRDWDRRGRSRDMEPRDRWSHTRNPRSRMPQRDLSLPVVAKTSFEMDRDDDRDSRAYESRSQDAESYQNVVDLAEDRKPHNTIQDNMENYRKLLSLGVQLAEDDGHSHMTQGHSSRSKRSAYPSTSRGLKTMPEAKKSTHRRGICEDESSHGVIMEKFIKDVSRSSKSGRARESSDRSQRFPRMSDDNWKDISLNKRESVIQQRVYEGNAFRGGFRFNSTLVSRKRVLERKRRYHFDTDGKGSIHDQKACPRKKPFECGSEMRKAMSMSSLSSLSSPSFTESQPIDFGAMPYVCDECGRSFSVISEFVEHQIMHTRENLYEYGESFIHSVAVSEVQKSQVGGKRFECKDCGETFNKSAALAEHRKIHARGYLVECKNQECEEAFMPSPTFSELQKIYGKDKFYECRVCKETFLHSSALIEHQKIHFGDDKDNEREHERERERGETFRPSPALNEFQKMYGKEKMYECKVCGETFLHSSSLKEHQKIHTRGNPFENKGKVCEETFIPGQSLKKRQKTYNKEKLYDFTDGRDAFMQSSELSEHQKIHSRKNLFEGRGYEKSVIHSGPFTESQKSHTITRPLESDEDEKAFTISSNPYENQKIPTKENVYEAKSYERSVIHSLASVEAQKSHSVAGPSKPKVMAESTIQSFDAINHQRVRAGGNTSEGREYSRSVIHSLVASKPPRSHNGNELVESNEKGESSIYISDLNDKRQKIPARENPCEGGSKNRNYEDSVIQSVSRAKPQKSVPGEGSGEFKKDGEFSVPSSNVREYQKARAKKKYIEHRSNETSVIHSLPFGEQTFRPRGMLYECQECGECFAHSSDLTEHQKIHEREKPSGSRNYEWSVIRSLAPTDPQTSYAQEQYAKEQAWNKCKEFRQFFATSEDLNTNQKIYDQEKSHGEESQGENTDGEETHSEETHGQETIEDPVIQGSDMEDPQKDDPDDKIYECEDCGLGFVDLTDLTDHQKVHSRKCLVDSREYTHSVIHTHSISEYQRDYTGEQLYECPKCGESFIHSSFLFEHQRIHEQDQLYSMKGCDDGFIALLPMKPRRNRAAERNPALAGSAIRCLLCGQGFIHSSALNEHMRLHREDDLLEQSQMAEEAIIPGLALTEFQRSQTEERLFECAVCGESFINPAELADHVTVHKNEPYEYGSSYTHTSFLTEPLKGAIPFYECKDCGKSFIHSTVLTKHKELHLEEEEEDEAAAAAAAAAQEVEANVHVPQVVLRIQGSNVEAAEPEVEAAEPEVEAAEPEVEAAEPNGEAEGPDGEAAEPIGEAGQPNGEAEQPNGDADEPDGAGIEDPEERAEEPEGKAEEPEGDADEPDGVGIEDPEEGEDQEIQVEEPYYDCHECTETFTSSTAFGEHLKTHASMIIFEPANAFGECSGYIERASTSTGGANQADEKYFKCDVCGQLFNDRLSLARHQNTHTG.

The region spanning His-46–Tyr-128 is the SCAN box domain. Disordered stretches follow at residues Tyr-128–Gln-230, Asp-266–Ile-306, and Lys-319–Asp-349. Positions Gln-129–Asp-142 are enriched in acidic residues. 4 stretches are compositionally biased toward basic and acidic residues: residues Asp-143–Ser-152, Ser-161–Ser-182, Phe-206–Asp-225, and Pro-295–Ile-306. 3 C2H2-type zinc fingers span residues Tyr-454–His-476, Phe-507–His-529, and Tyr-565–His-587. Residues Phe-588–Thr-607 show a composition bias toward basic and acidic residues. A disordered region spans residues Phe-588 to Pro-610. A C2H2-type 4 zinc finger spans residues Tyr-627–His-649. Positions Leu-838–Arg-930 are disordered. The span at Leu-868–Pro-881 shows a compositional bias: basic and acidic residues. The C2H2-type 5 zinc-finger motif lies at Tyr-969–His-991. Residues Glu-1056–Asp-1104 are disordered. Residues Glu-1071–Glu-1082 show a composition bias toward basic and acidic residues. 5 consecutive C2H2-type zinc fingers follow at residues Tyr-1107–His-1129, Tyr-1163–His-1185, Ile-1225–His-1247, Phe-1282–His-1304, and Tyr-1332–His-1354. The segment covering Ala-1395–Ala-1415 has biased composition (acidic residues). The tract at residues Ala-1395–Asp-1495 is disordered. 7 repeat units span residues Pro-1397 to Glu-1403, Pro-1404 to Glu-1410, Pro-1411 to Glu-1417, Pro-1418 to Ala-1422, Pro-1425 to Ala-1429, Pro-1432 to Ala-1436, and Pro-1439 to Ala-1443. The interval Pro-1397–Glu-1417 is 3 X 7 AA repeat of P-E-V-E-A-A-E. Residues Pro-1418–Ala-1443 form a 4 X 5 AA repeat of P-X-G-E-A region. Composition is skewed to acidic residues over residues Asp-1449 to Glu-1466 and Pro-1475 to Asp-1495. 2 consecutive C2H2-type zinc fingers follow at residues Tyr-1505 to His-1527 and Phe-1564 to His-1586.

The protein belongs to the krueppel C2H2-type zinc-finger protein family. As to quaternary structure, homodimer. Interacts with SIAH1A and SIAH2. Interacts with TRAF2.

It localises to the nucleus. The protein localises to the cytoplasm. In terms of biological role, induces apoptosis in cooperation with SIAH1A. Acts as a mediator between p53/TP53 and BAX in a neuronal death pathway that is activated by DNA damage. Acts synergistically with TRAF2 and inhibits TNF induced apoptosis through activation of NF-kappa-B. This is Paternally-expressed gene 3 protein (PEG3) from Pan troglodytes (Chimpanzee).